Consider the following 115-residue polypeptide: U17-barytoxin-Tl1b (115 aa).

A signal peptide spans 1-20 (MKTIIVFLSLLVLATKFGDA). The propeptide occupies 21–74 (KEGVNQKQKKEVTQNEFREEYLNEMAAMSLVQQLEAIERALFENEAGRNSRQKR). Cystine bridges form between Cys-75–Cys-89, Cys-82–Cys-94, and Cys-88–Cys-109.

This sequence belongs to the neurotoxin 14 (magi-1) family. 03 (ICK-30-40) subfamily. Expressed by the venom gland.

Its subcellular location is the secreted. In terms of biological role, ion channel inhibitor. The polypeptide is U17-barytoxin-Tl1b (Trittame loki (Brush-footed trapdoor spider)).